A 120-amino-acid polypeptide reads, in one-letter code: Peptidyl-tRNA hydrolase (120 aa).

It belongs to the PTH2 family.

Its subcellular location is the cytoplasm. The catalysed reaction is an N-acyl-L-alpha-aminoacyl-tRNA + H2O = an N-acyl-L-amino acid + a tRNA + H(+). Its function is as follows. The natural substrate for this enzyme may be peptidyl-tRNAs which drop off the ribosome during protein synthesis. The chain is Peptidyl-tRNA hydrolase from Sulfolobus acidocaldarius (strain ATCC 33909 / DSM 639 / JCM 8929 / NBRC 15157 / NCIMB 11770).